The chain runs to 871 residues: Tegument protein UL47 homolog (871 aa).

Residues 1–212 (MDQHHGARGG…DEDDMEVIRD (212 aa)) are disordered. The Nuclear localization signal motif lies at 13 to 33 (IRRPRRSIESRSHPFRATGNT). Composition is skewed to polar residues over residues 30–41 (TGNTQRTYSTPR) and 59–81 (EQAS…STSF). 3 stretches are compositionally biased toward acidic residues: residues 114-134 (SSSE…EEDQ), 146-155 (SSDENDEEED), and 185-207 (SESE…EDDM).

It belongs to the alphaherpesvirinae HHV-1 UL47 family. As to quaternary structure, interacts with US3 kinase. Interacts with UL31 and UL34; these interactions seem important for efficient virion nuclear egress. Interacts with UL41/VHS. Phosphorylated by US3. This phosphorylation is required for proper nuclear localization.

It localises to the virion tegument. Its subcellular location is the host nucleus. The protein resides in the host cytoplasm. Its function is as follows. Tegument protein that can bind to various RNA transcripts. Plays a role in the attenuation of selective viral and cellular mRNA degradation by modulating the activity of host shutoff RNase UL41/VHS. Also plays a role in the primary envelopment of virions in the perinuclear space, probably by interacting with two nuclear egress proteins UL31 and UL34. The polypeptide is Tegument protein UL47 homolog (Equine herpesvirus 1 (strain V592) (EHV-1)).